Consider the following 269-residue polypeptide: Putative 12-oxophytodienoate reductase-like protein 2A (269 aa).

FMN contacts are provided by residues 28-30 (PLT) and Gln103. 175-178 (HGAH) contributes to the substrate binding site. Tyr180 functions as the Proton donor in the catalytic mechanism. Position 227 (Arg227) interacts with FMN.

This sequence belongs to the NADH:flavin oxidoreductase/NADH oxidase family. The cofactor is FMN.

Putative oxophytodienoate reductase that may be involved in the biosynthesis or metabolism of oxylipin signaling molecules. The sequence is that of Putative 12-oxophytodienoate reductase-like protein 2A from Arabidopsis thaliana (Mouse-ear cress).